The primary structure comprises 500 residues: Probable malate:quinone oxidoreductase (500 aa).

Belongs to the MQO family. FAD is required as a cofactor.

The catalysed reaction is (S)-malate + a quinone = a quinol + oxaloacetate. Its pathway is carbohydrate metabolism; tricarboxylic acid cycle; oxaloacetate from (S)-malate (quinone route): step 1/1. The chain is Probable malate:quinone oxidoreductase from Prochlorococcus marinus (strain MIT 9211).